We begin with the raw amino-acid sequence, 105 residues long: Large ribosomal subunit protein uL24 (105 aa).

The protein belongs to the universal ribosomal protein uL24 family. In terms of assembly, part of the 50S ribosomal subunit.

Functionally, one of two assembly initiator proteins, it binds directly to the 5'-end of the 23S rRNA, where it nucleates assembly of the 50S subunit. One of the proteins that surrounds the polypeptide exit tunnel on the outside of the subunit. The chain is Large ribosomal subunit protein uL24 from Azoarcus sp. (strain BH72).